The primary structure comprises 209 residues: Uracil phosphoribosyltransferase (209 aa).

5-phospho-alpha-D-ribose 1-diphosphate contacts are provided by residues R79, R104, and 131–139 (DPMLATGHT). Uracil-binding positions include I194 and 199 to 201 (GDA). D200 serves as a coordination point for 5-phospho-alpha-D-ribose 1-diphosphate.

It belongs to the UPRTase family. The cofactor is Mg(2+).

It carries out the reaction UMP + diphosphate = 5-phospho-alpha-D-ribose 1-diphosphate + uracil. Its pathway is pyrimidine metabolism; UMP biosynthesis via salvage pathway; UMP from uracil: step 1/1. Allosterically activated by GTP. Functionally, catalyzes the conversion of uracil and 5-phospho-alpha-D-ribose 1-diphosphate (PRPP) to UMP and diphosphate. The sequence is that of Uracil phosphoribosyltransferase from Caulobacter sp. (strain K31).